A 155-amino-acid chain; its full sequence is Probable tellurium resistance transcriptional regulator TerW (155 aa).

Functionally, involved in tellurite resistance. TerW binds specifically to the potential promoter region of the terZABCDE operon and probably regulates expression of the genes. The polypeptide is Probable tellurium resistance transcriptional regulator TerW (Escherichia coli).